Consider the following 179-residue polypeptide: Adenine phosphoribosyltransferase (179 aa).

Belongs to the purine/pyrimidine phosphoribosyltransferase family. As to quaternary structure, homodimer.

Its subcellular location is the cytoplasm. The catalysed reaction is AMP + diphosphate = 5-phospho-alpha-D-ribose 1-diphosphate + adenine. The protein operates within purine metabolism; AMP biosynthesis via salvage pathway; AMP from adenine: step 1/1. In terms of biological role, catalyzes a salvage reaction resulting in the formation of AMP, that is energically less costly than de novo synthesis. In Methylacidiphilum infernorum (isolate V4) (Methylokorus infernorum (strain V4)), this protein is Adenine phosphoribosyltransferase.